We begin with the raw amino-acid sequence, 61 residues long: Inner membrane protein p12 (61 aa).

The helical transmembrane segment at 16 to 36 (LLIVAIIVVIMAIMLYYFWWM) threads the bilayer.

The protein belongs to the asfivirus inner membrane protein p12 family. Homomultimer; disulfide-linked. In terms of processing, not glycosylated.

The protein localises to the virion membrane. This is Inner membrane protein p12 from Ornithodoros (relapsing fever ticks).